Consider the following 203-residue polypeptide: Dephospho-CoA kinase (203 aa).

Residues 6–203 (ILGLTGGIGS…FYLTLRGGRA (198 aa)) form the DPCK domain. Position 14 to 19 (14 to 19 (GSGKSA)) interacts with ATP.

The protein belongs to the CoaE family.

The protein resides in the cytoplasm. It carries out the reaction 3'-dephospho-CoA + ATP = ADP + CoA + H(+). It functions in the pathway cofactor biosynthesis; coenzyme A biosynthesis; CoA from (R)-pantothenate: step 5/5. Its function is as follows. Catalyzes the phosphorylation of the 3'-hydroxyl group of dephosphocoenzyme A to form coenzyme A. The protein is Dephospho-CoA kinase of Pseudomonas aeruginosa (strain ATCC 15692 / DSM 22644 / CIP 104116 / JCM 14847 / LMG 12228 / 1C / PRS 101 / PAO1).